The following is a 243-amino-acid chain: Probable transcriptional regulatory protein BRE_29 (243 aa).

The protein belongs to the TACO1 family.

The protein localises to the cytoplasm. The polypeptide is Probable transcriptional regulatory protein BRE_29 (Borrelia recurrentis (strain A1)).